We begin with the raw amino-acid sequence, 851 residues long: Transcriptional regulator RFX1 (851 aa).

2 stretches are compositionally biased toward polar residues: residues 1–11 and 20–34; these read MSSDQTPQNRN and PRLQ…STGP. Disordered regions lie at residues 1 to 121, 134 to 170, and 195 to 230; these read MSSD…EPHP, QSQF…PQTY, and HEAS…TGEN. Over residues 38 to 53 the composition is skewed to basic and acidic residues; sequence QQRERSQEQESDHEHQ. Over residues 54 to 84 the composition is skewed to low complexity; sequence QAQQHLHQFQQSNLTPSTTAFPSSTSIPTFS. Polar residues predominate over residues 85-114; that stretch reads KQDQGYHNQFSSPQSSYRKIGNFAQSSNAP. Low complexity predominate over residues 141-170; sequence YSSPYIGQSQSQSQSQSQAQPQPHPQPQTY. A compositionally biased stretch (polar residues) spans 199–211; sequence SADNDSATNITTP. A DNA-binding region (RFX-type winged-helix) is located at residues 282-357; the sequence is GMVWLLNSCD…YHYCGIKLTG (76 aa). Disordered stretches follow at residues 368–411 and 783–806; these read YQQK…SVSY and PPSL…TGTQ. Positions 384–393 are enriched in polar residues; that stretch reads AQVGSSTSSA. Over residues 783-797 the composition is skewed to low complexity; that stretch reads PPSLSSLPQTQQQNP.

This sequence belongs to the RFX family.

It localises to the nucleus. Its function is as follows. Transcription factor involved in DNA damage responses, morphogenesis, and virulence. This chain is Transcriptional regulator RFX1 (RFX1), found in Candida albicans (strain SC5314 / ATCC MYA-2876) (Yeast).